The sequence spans 717 residues: Polyribonucleotide nucleotidyltransferase (717 aa).

The Mg(2+) site is built by Asp496 and Asp502. A KH domain is found at 563–622; the sequence is PRLLSFKIDPEMIGLVIGPGGKTIKGITEETGVKIDIDDDGTVTIAAADGEKAKQACNII. The S1 motif domain occupies 632-700; that stretch reads GDVYVGRVTR…SKGRVNLTRL (69 aa).

The protein belongs to the polyribonucleotide nucleotidyltransferase family. It depends on Mg(2+) as a cofactor.

Its subcellular location is the cytoplasm. It carries out the reaction RNA(n+1) + phosphate = RNA(n) + a ribonucleoside 5'-diphosphate. In terms of biological role, involved in mRNA degradation. Catalyzes the phosphorolysis of single-stranded polyribonucleotides processively in the 3'- to 5'-direction. The polypeptide is Polyribonucleotide nucleotidyltransferase (Trichodesmium erythraeum (strain IMS101)).